A 612-amino-acid chain; its full sequence is MGNVCIGPRRNFAKNGLLGILRPRHAAPSSPSQPTTTSRSIPVVLPSAPSSKPPPPTQTAPPVPVVISEPPPPQPQPEPQPAAPSQPPPPQEQPSPPPPASSNTTQQPPPPQQRQQSRAKKPAHIKRISSAGLQVESVLRRKTENLKDKYSLGRKLGQGQFGTTYLCVDKANGGEYACKSIAKRKLLTDEDVEDVRREIQIMHHLAGHPNIISIRGAYEDAVAVHVVMELCAGGELFDRIVRKGHYTERQAAGLARVIVAVVESCHSLGVMHRDLKPENFLFVGNEEDAPLKTIDFGLSMFFRPGEVFTDVVGSPYYVAPEVLKKSYGQEADVWSAGVIIYILLCGVPPFWAETEQGIFEQVLHGTLDFESDPWPNVSDGAKDLLRKVLVRDPKKRLTAHEVLCHPWLQMSGSAPDKPLDSAVLSRLRQFSAMNKLKKMALRVIAENLSEEEIAGLKEMFKMMDTDNSGQINYEELKAGLERVGANMKESEIYQLMQAADIDNSGTIDYGEFIAATLHLNKVEREDHLYAAFQYFDKDGSGYITSDELQQACDEFGIEDVRLEDMIGEVDQDNDGRIDYNEFVAMMQKTTTGFGKKGGHNFSGFRDALKSHS.

Residue Gly-2 is the site of N-myristoyl glycine attachment. Residues 23-132 (PRHAAPSSPS…AHIKRISSAG (110 aa)) form a disordered region. Positions 28–50 (PSSPSQPTTTSRSIPVVLPSAPS) are enriched in low complexity. Residues 51-100 (SKPPPPTQTAPPVPVVISEPPPPQPQPEPQPAAPSQPPPPQEQPSPPPPA) are compositionally biased toward pro residues. The segment covering 117–127 (SRAKKPAHIKR) has biased composition (basic residues). Residues 150–408 (YSLGRKLGQG…AHEVLCHPWL (259 aa)) enclose the Protein kinase domain. ATP contacts are provided by residues 156-164 (LGQGQFGTT) and Lys-179. Asp-274 serves as the catalytic Proton acceptor. Residues 414-444 (APDKPLDSAVLSRLRQFSAMNKLKKMALRVI) form an autoinhibitory domain region. EF-hand domains follow at residues 451–486 (EEIAGLKEMFKMMDTDNSGQINYEELKAGLERVGAN), 487–522 (MKESEIYQLMQAADIDNSGTIDYGEFIAATLHLNKV), 523–558 (EREDHLYAAFQYFDKDGSGYITSDELQQACDEFGIE), and 561–592 (RLEDMIGEVDQDNDGRIDYNEFVAMMQKTTTG). The Ca(2+) site is built by Asp-464, Asp-466, Ser-468, Gln-470, Glu-475, Asp-500, Asp-502, Ser-504, Thr-506, Glu-511, Asp-536, Asp-538, Ser-540, Tyr-542, Glu-547, Asp-570, Asp-572, Asp-574, Arg-576, and Glu-581.

This sequence belongs to the protein kinase superfamily. Ser/Thr protein kinase family. CDPK subfamily.

It localises to the membrane. The enzyme catalyses L-seryl-[protein] + ATP = O-phospho-L-seryl-[protein] + ADP + H(+). The catalysed reaction is L-threonyl-[protein] + ATP = O-phospho-L-threonyl-[protein] + ADP + H(+). With respect to regulation, activated by calcium. Autophosphorylation may play an important role in the regulation of the kinase activity. Its function is as follows. May play a role in signal transduction pathways that involve calcium as a second messenger. The polypeptide is Calcium-dependent protein kinase 27 (Oryza sativa subsp. japonica (Rice)).